Here is a 484-residue protein sequence, read N- to C-terminus: NADH-quinone oxidoreductase subunit N (484 aa).

Helical transmembrane passes span 11-31, 42-62, 79-98, 113-133, 134-154, 167-187, 211-231, 248-268, 279-299, 313-333, 335-355, 378-398, 408-428, and 457-477; these read SLWI…VLLI, VTYY…FNLI, MASV…MVYS, FVLV…YSLL, TLYL…AIAR, FVLG…IYGI, LIIN…LGAV, VTLF…VRIL, WSDL…VVAL, ISHV…GYGA, AFYM…IILL, FALM…LVGF, VVSA…VISA, and LVLS…DFWM.

This sequence belongs to the complex I subunit 2 family. As to quaternary structure, NDH-1 is composed of 14 different subunits. Subunits NuoA, H, J, K, L, M, N constitute the membrane sector of the complex.

Its subcellular location is the cell inner membrane. It catalyses the reaction a quinone + NADH + 5 H(+)(in) = a quinol + NAD(+) + 4 H(+)(out). NDH-1 shuttles electrons from NADH, via FMN and iron-sulfur (Fe-S) centers, to quinones in the respiratory chain. The immediate electron acceptor for the enzyme in this species is believed to be ubiquinone. Couples the redox reaction to proton translocation (for every two electrons transferred, four hydrogen ions are translocated across the cytoplasmic membrane), and thus conserves the redox energy in a proton gradient. The sequence is that of NADH-quinone oxidoreductase subunit N from Ruthia magnifica subsp. Calyptogena magnifica.